A 1531-amino-acid chain; its full sequence is Probable outer membrane protein PmpD (1531 aa).

A signal peptide spans 1–20 (MSSEKDIKSTCSKFSLSVVA). The Autotransporter domain occupies 1244–1531 (EFDYSTNVWG…EANTGLRLIF (288 aa)).

The protein belongs to the PMP outer membrane protein family.

The protein localises to the secreted. It is found in the cell wall. It localises to the cell outer membrane. This is Probable outer membrane protein PmpD (pmpD) from Chlamydia trachomatis serovar D (strain ATCC VR-885 / DSM 19411 / UW-3/Cx).